The chain runs to 249 residues: Mannose-binding protein C (249 aa).

Positions 1–20 (MSLFTSLPFLLLTAVTASCA) are cleaved as a signal peptide. The Collagen-like domain maps to 43–101 (GINGIPGKDGRDGAKGEKGEPGQGLRGSQGPPGKMGPQGTPGIPGIPGPIGQKGDPGEN). Residues 43-103 (GINGIPGKDG…QKGDPGENMG (61 aa)) form a disordered region. 4-hydroxyproline is present on Pro-48. Over residues 50 to 62 (KDGRDGAKGEKGE) the composition is skewed to basic and acidic residues. 4-hydroxyproline is present on residues Pro-63, Pro-74, Pro-83, and Pro-86. A compositionally biased stretch (low complexity) spans 79-95 (PQGTPGIPGIPGPIGQK). The stretch at 113–131 (RATLQSELNQIKNWLIFSL) forms a coiled coil. Positions 135-246 (VGKKAFFTNG…CSASFLTVCE (112 aa)) constitute a C-type lectin domain. 2 cysteine pairs are disulfide-bonded: Cys-156/Cys-245 and Cys-223/Cys-237.

In terms of assembly, oligomeric complex of 3 or more homotrimers. Interacts with MASP1 and MASP2. Interacts with MEP1A and MEP1B and may inhibit their catalytic activity. In terms of processing, hydroxylation on proline residues within the sequence motif, GXPG, is most likely to be 4-hydroxy as this fits the requirement for 4-hydroxylation in vertebrates.

It localises to the secreted. Calcium-dependent lectin involved in innate immune defense. Binds mannose, fucose and N-acetylglucosamine on different microorganisms and activates the lectin complement pathway. Binds to late apoptotic cells, as well as to apoptotic blebs and to necrotic cells, but not to early apoptotic cells, facilitating their uptake by macrophages. The chain is Mannose-binding protein C (MBL) from Bos taurus (Bovine).